The sequence spans 130 residues: Small ribosomal subunit protein uS8 (130 aa).

Belongs to the universal ribosomal protein uS8 family. As to quaternary structure, part of the 30S ribosomal subunit. Contacts proteins S5 and S12.

In terms of biological role, one of the primary rRNA binding proteins, it binds directly to 16S rRNA central domain where it helps coordinate assembly of the platform of the 30S subunit. In Shewanella pealeana (strain ATCC 700345 / ANG-SQ1), this protein is Small ribosomal subunit protein uS8.